The chain runs to 504 residues: ATP synthase subunit alpha (504 aa).

169–176 serves as a coordination point for ATP; the sequence is GDRKTGKT.

This sequence belongs to the ATPase alpha/beta chains family. In terms of assembly, F-type ATPases have 2 components, CF(1) - the catalytic core - and CF(0) - the membrane proton channel. CF(1) has five subunits: alpha(3), beta(3), gamma(1), delta(1), epsilon(1). CF(0) has three main subunits: a(1), b(2) and c(9-12). The alpha and beta chains form an alternating ring which encloses part of the gamma chain. CF(1) is attached to CF(0) by a central stalk formed by the gamma and epsilon chains, while a peripheral stalk is formed by the delta and b chains.

The protein localises to the cell membrane. It carries out the reaction ATP + H2O + 4 H(+)(in) = ADP + phosphate + 5 H(+)(out). Produces ATP from ADP in the presence of a proton gradient across the membrane. The alpha chain is a regulatory subunit. The protein is ATP synthase subunit alpha of Lactiplantibacillus plantarum (strain ATCC BAA-793 / NCIMB 8826 / WCFS1) (Lactobacillus plantarum).